The chain runs to 266 residues: Phosphoethanolamine N-methyltransferase (266 aa).

Residue Gln-18 coordinates phosphoethanolamine. Tyr-19 is an active-site residue. Tyr-27 contacts phosphoethanolamine. S-adenosyl-L-methionine-binding residues include Ile-36, Ser-37, Gly-63, Asp-85, Ile-86, Asp-110, Ile-111, and Arg-127. The active site involves His-132. Positions 160, 175, 179, 181, and 247 each coordinate phosphoethanolamine.

Belongs to the class I-like SAM-binding methyltransferase superfamily. PEAMT family. In terms of assembly, monomer.

The protein resides in the golgi apparatus membrane. It is found in the cytoplasm. The catalysed reaction is phosphoethanolamine + S-adenosyl-L-methionine = N-methylethanolamine phosphate + S-adenosyl-L-homocysteine + H(+). The enzyme catalyses N-methylethanolamine phosphate + S-adenosyl-L-methionine = N,N-dimethylethanolamine phosphate + S-adenosyl-L-homocysteine + H(+). It catalyses the reaction N,N-dimethylethanolamine phosphate + S-adenosyl-L-methionine = phosphocholine + S-adenosyl-L-homocysteine + H(+). Its pathway is phospholipid metabolism; phosphatidylcholine biosynthesis; phosphocholine from phosphoethanolamine. With respect to regulation, inhibited by phosphocholine. Inhibited by hexadecylphosphocholine (miltefosine). Inhibited by S-adenosyl-l-homocysteine. Weakly inhibited in vitro by amodiaquine, chloroquine and primaquine. Inhibited by NSC-158011. Functionally, catalyzes N-methylation of phosphoethanolamine, phosphomonomethylethanolamine and phosphodimethylethanolamine, the three methylation steps required to convert phosphoethanolamine to phosphocholine. Has no ethanolamine- or phosphatidylethanolamine-N-methyltransferase activity. Required for gametocyte development, maturation and transmission to mosquitoes and for oocyst formation in the mosquito midgut. The protein is Phosphoethanolamine N-methyltransferase of Plasmodium falciparum (isolate 3D7).